Reading from the N-terminus, the 192-residue chain is Leucine-rich repeat-containing protein 51 (192 aa).

LRR repeat units lie at residues 50 to 71 (MTQSLWLNNNVLTDLRDFNHAV), 80 to 101 (NLAWIDLSFNDLTSIDPVLTTF), and 103 to 124 (NLSVLYLHGNSIQRLGEVNKLA). Residues 137–175 (NPIEEEKGYRQYVLCTLPHITTFDFSGVTKADRTTAEVW) enclose the LRRCT domain.

It is found in the cytoplasm. The protein is Leucine-rich repeat-containing protein 51 of Bos taurus (Bovine).